Consider the following 594-residue polypeptide: Protein wntless (594 aa).

Residues 1–13 (MSGTILENLSGRK) are Cytoplasmic-facing. Residues 14-34 (LSILVATLLLCQVLCFLLGGL) traverse the membrane as a helical segment. Residues 35 to 239 (YAPLPAGHVT…AIHQNGGFTQ (205 aa)) lie on the Lumenal side of the membrane. An N-linked (GlcNAc...) asparagine glycan is attached at N58. Residues 240–260 (IWLLLKTMLFPFVVGIMIWFW) traverse the membrane as a helical segment. At 261–270 (RRVHLLQRSP) the chain is on the cytoplasmic side. The chain crosses the membrane as a helical span at residues 271 to 291 (ALLEYMLIYLGAALTFLNLPL). Over 292 to 311 (EYLSLVYEMPYMLLLSDIRQ) the chain is Lumenal. The helical transmembrane segment at 312 to 332 (GIFYAMLLTFWLVFAGEHMLI) threads the bilayer. The Cytoplasmic segment spans residues 333–344 (QDAPNKSTIRSR). A helical transmembrane segment spans residues 345-365 (YWKHLSAVVVGCISLFVFDIC). At 366–390 (ERGVQLRNPFYSIWTTPLGAKVAMT) the chain is on the lumenal side. The chain crosses the membrane as a helical span at residues 391–411 (FIVLAGVSAAIYFLFLCYMIW). The Cytoplasmic portion of the chain corresponds to 412–473 (KVFRNIGDKR…ANESKGLIYR (62 aa)). The chain crosses the membrane as a helical span at residues 474–494 (FKFLMLATLVCAALTVAGFIM). The Lumenal portion of the chain corresponds to 495-514 (GQMAEGQWDWNDNVAIQPTS). Residues 515 to 535 (AFLTGVYGMWNIYIFALLILY) traverse the membrane as a helical segment. Residues 536–594 (APSHKQWPTMHHSDETTQSNENIVASAASEEIEFSHLPSDSNPSEISSLTSFTRKVAFD) lie on the Cytoplasmic side of the membrane. The tract at residues 571-594 (HLPSDSNPSEISSLTSFTRKVAFD) is disordered. The segment covering 573-588 (PSDSNPSEISSLTSFT) has biased composition (polar residues).

This sequence belongs to the wntless family. Interacts with wg; in the Golgi. Interacts with Vps35, a component of the retromer complex; wls stability is regulated by Vps35. Ubiquitously expressed in the wing imaginal disk, increased expression is observed in a stripe at the dorso-ventral boundary and other regions of the wing disk that express wg. Also expresses in the leg imaginal disk. During larval development, expression is seen in both motorneurons and muscle.

The protein resides in the presynaptic cell membrane. It is found in the postsynaptic cell membrane. Its subcellular location is the cell membrane. The protein localises to the endosome membrane. It localises to the endoplasmic reticulum membrane. The protein resides in the golgi apparatus membrane. Its function is as follows. A segment polarity gene required for wingless (wg)-dependent patterning processes, acting in both wg-sending cells and wg-target cells. In non-neuronal cells wls directs wg secretion. The wls traffic loop encompasses the Golgi, the cell surface, an endocytic compartment and a retrograde route leading back to the Golgi, and involves clathrin-mediated endocytosis and the retromer complex (a conserved protein complex consisting of Vps35 and Vps26). In neuronal cells (the larval motorneuron NMJ), the wg signal moves across the synapse via the release of wls-containing exosome-like vesicles. Postsynaptic wls is required for the trafficking of fz2 through the fz2-interacting protein Grip. The protein is Protein wntless of Drosophila melanogaster (Fruit fly).